A 125-amino-acid chain; its full sequence is Large ribosomal subunit protein uL22c (125 aa).

This sequence belongs to the universal ribosomal protein uL22 family. In terms of assembly, part of the 50S ribosomal subunit.

It localises to the plastid. Its subcellular location is the chloroplast. This protein binds specifically to 23S rRNA. Functionally, the globular domain of the protein is located near the polypeptide exit tunnel on the outside of the subunit, while an extended beta-hairpin is found that lines the wall of the exit tunnel in the center of the 70S ribosome. In Nuphar advena (Common spatterdock), this protein is Large ribosomal subunit protein uL22c (rpl22).